The following is a 552-amino-acid chain: Carotenoid cleavage dioxygenase 8 homolog A, chloroplastic (552 aa).

The N-terminal 43 residues, 1–43 (MATSLTLIATPCTAPRSSSSFALAPRLPPRCSNATAARRRAVR), are a transit peptide targeting the chloroplast. The segment at 32–73 (SNATAARRRAVRATTLQSDQEPAGSGDSGATTTKLSASTSVR) is disordered. Residues 59-72 (SGATTTKLSASTSV) are compositionally biased toward polar residues. 4 residues coordinate Fe cation: histidine 239, histidine 289, histidine 356, and histidine 543.

Belongs to the carotenoid oxygenase family. The cofactor is Fe(2+). In terms of tissue distribution, highly expressed in panicles, inflorescences and parenchyma cells of the root stele, and at lower levels in shoot apex, leaf buds and xylem parenchyma cells of the stem.

The protein localises to the plastid. Its subcellular location is the chloroplast. Functionally, may be involved in strigolactones biosynthesis. This is Carotenoid cleavage dioxygenase 8 homolog A, chloroplastic (CCD8A) from Oryza sativa subsp. japonica (Rice).